We begin with the raw amino-acid sequence, 499 residues long: Ethanolamine-phosphate phospho-lyase (499 aa).

Position 278 is an N6-(pyridoxal phosphate)lysine (lysine 278).

Belongs to the class-III pyridoxal-phosphate-dependent aminotransferase family. In terms of assembly, homotetramer. It depends on pyridoxal 5'-phosphate as a cofactor.

It localises to the mitochondrion. It carries out the reaction phosphoethanolamine + H2O = acetaldehyde + NH4(+) + phosphate. Its function is as follows. Catalyzes the pyridoxal-phosphate-dependent breakdown of phosphoethanolamine, converting it to ammonia, inorganic phosphate and acetaldehyde. The polypeptide is Ethanolamine-phosphate phospho-lyase (Etnppl) (Mus musculus (Mouse)).